We begin with the raw amino-acid sequence, 711 residues long: Ribosomal RNA large subunit methyltransferase K/L (711 aa).

The THUMP domain occupies 42 to 153 (DAQRAVLWSR…KGRATISVDL (112 aa)).

Belongs to the methyltransferase superfamily. RlmKL family.

Its subcellular location is the cytoplasm. The catalysed reaction is guanosine(2445) in 23S rRNA + S-adenosyl-L-methionine = N(2)-methylguanosine(2445) in 23S rRNA + S-adenosyl-L-homocysteine + H(+). It carries out the reaction guanosine(2069) in 23S rRNA + S-adenosyl-L-methionine = N(2)-methylguanosine(2069) in 23S rRNA + S-adenosyl-L-homocysteine + H(+). Its function is as follows. Specifically methylates the guanine in position 2445 (m2G2445) and the guanine in position 2069 (m7G2069) of 23S rRNA. The sequence is that of Ribosomal RNA large subunit methyltransferase K/L from Xanthomonas campestris pv. campestris (strain B100).